The sequence spans 488 residues: Probable cytosol aminopeptidase (488 aa).

The Mn(2+) site is built by K254 and D259. Residue K266 is part of the active site. Mn(2+)-binding residues include D277, D336, and E338. Residue R340 is part of the active site.

It belongs to the peptidase M17 family. It depends on Mn(2+) as a cofactor.

Its subcellular location is the cytoplasm. The enzyme catalyses Release of an N-terminal amino acid, Xaa-|-Yaa-, in which Xaa is preferably Leu, but may be other amino acids including Pro although not Arg or Lys, and Yaa may be Pro. Amino acid amides and methyl esters are also readily hydrolyzed, but rates on arylamides are exceedingly low.. It carries out the reaction Release of an N-terminal amino acid, preferentially leucine, but not glutamic or aspartic acids.. In terms of biological role, presumably involved in the processing and regular turnover of intracellular proteins. Catalyzes the removal of unsubstituted N-terminal amino acids from various peptides. This chain is Probable cytosol aminopeptidase, found in Roseiflexus castenholzii (strain DSM 13941 / HLO8).